A 70-amino-acid chain; its full sequence is DNA gyrase inhibitor YacG (70 aa).

Positions 20, 23, 35, and 39 each coordinate Zn(2+).

This sequence belongs to the DNA gyrase inhibitor YacG family. As to quaternary structure, interacts with GyrB. The cofactor is Zn(2+).

Functionally, inhibits all the catalytic activities of DNA gyrase by preventing its interaction with DNA. Acts by binding directly to the C-terminal domain of GyrB, which probably disrupts DNA binding by the gyrase. The sequence is that of DNA gyrase inhibitor YacG from Rhizobium leguminosarum bv. trifolii (strain WSM2304).